The chain runs to 133 residues: Small ribosomal subunit protein uS8 (133 aa).

A disordered region spans residues 1 to 28 (MANHDPISDMLTRIRNASEKRHEKTKVP). Residues 16–26 (NASEKRHEKTK) show a composition bias toward basic and acidic residues.

The protein belongs to the universal ribosomal protein uS8 family. Part of the 30S ribosomal subunit. Contacts proteins S5 and S12.

Functionally, one of the primary rRNA binding proteins, it binds directly to 16S rRNA central domain where it helps coordinate assembly of the platform of the 30S subunit. The sequence is that of Small ribosomal subunit protein uS8 from Prochlorococcus marinus (strain NATL2A).